Here is a 1526-residue protein sequence, read N- to C-terminus: Cell wall protein IFF4 (1526 aa).

The signal sequence occupies residues M1 to A20. 2 N-linked (GlcNAc...) asparagine glycosylation sites follow: N93 and N498. The tract at residues S512–S541 is disordered. Over residues M525–S541 the composition is skewed to polar residues. N-linked (GlcNAc...) asparagine glycosylation is present at N637. Residues W1180–A1207 are disordered. Over residues S1193–A1207 the composition is skewed to polar residues. Residues N1451, N1463, N1479, N1502, and N1506 are each glycosylated (N-linked (GlcNAc...) asparagine). The disordered stretch occupies residues S1455–D1483. Residue N1502 is the site of GPI-anchor amidated asparagine attachment. Positions G1503 to I1526 are cleaved as a propeptide — removed in mature form.

Belongs to the HYR1/IFF family. Post-translationally, the GPI-anchor is attached to the protein in the endoplasmic reticulum and serves to target the protein to the cell surface. There, the glucosamine-inositol phospholipid moiety is cleaved off and the GPI-$modified mannoprotein is covalently attached via its lipidless GPI glycan remnant to the 1,6-beta-glucan of the outer cell wall layer.

Its subcellular location is the secreted. It is found in the cell wall. It localises to the membrane. Functionally, GPI-anchored cell wall protein involved in cell wall organization, hyphal growth, as well as in host-fungal interaction and virulence. Plays a role in adherence to plastic and to host epithelial cells. Promotes the tissue fungal burden during murine vaginal candidiasis. Also increases susceptibility to neutrophil-mediated killing. Furthermore, contributes to the severity of hematogenously disseminated candidiasis in normal mice, but not in neutropenic mice. In Candida albicans (strain SC5314 / ATCC MYA-2876) (Yeast), this protein is Cell wall protein IFF4 (IFF4).